Here is a 314-residue protein sequence, read N- to C-terminus: Ferrochelatase (314 aa).

Residues H184 and E259 each coordinate Fe cation.

It belongs to the ferrochelatase family.

Its subcellular location is the cytoplasm. It carries out the reaction heme b + 2 H(+) = protoporphyrin IX + Fe(2+). It functions in the pathway porphyrin-containing compound metabolism; protoheme biosynthesis; protoheme from protoporphyrin-IX: step 1/1. In terms of biological role, catalyzes the ferrous insertion into protoporphyrin IX. The sequence is that of Ferrochelatase from Chlamydia trachomatis serovar D (strain ATCC VR-885 / DSM 19411 / UW-3/Cx).